Reading from the N-terminus, the 198-residue chain is Segregation and condensation protein B (198 aa).

Residues 168-198 (KLADPATDEPDQNEMDLFFDRFNQSKEQEEE) form a disordered region.

Belongs to the ScpB family. As to quaternary structure, homodimer. Homodimerization may be required to stabilize the binding of ScpA to the Smc head domains. Component of a cohesin-like complex composed of ScpA, ScpB and the Smc homodimer, in which ScpA and ScpB bind to the head domain of Smc. The presence of the three proteins is required for the association of the complex with DNA.

It is found in the cytoplasm. Functionally, participates in chromosomal partition during cell division. May act via the formation of a condensin-like complex containing Smc and ScpA that pull DNA away from mid-cell into both cell halves. The sequence is that of Segregation and condensation protein B from Listeria monocytogenes serotype 4b (strain CLIP80459).